Reading from the N-terminus, the 97-residue chain is RNA-binding protein Hfq (97 aa).

In terms of domain architecture, Sm spans 10-70 (DPFLNALRKE…ISTIVPARSV (61 aa)).

It belongs to the Hfq family. In terms of assembly, homohexamer.

Functionally, RNA chaperone that binds small regulatory RNA (sRNAs) and mRNAs to facilitate mRNA translational regulation in response to envelope stress, environmental stress and changes in metabolite concentrations. Also binds with high specificity to tRNAs. The sequence is that of RNA-binding protein Hfq from Neisseria gonorrhoeae (strain ATCC 700825 / FA 1090).